The primary structure comprises 239 residues: MPTLGVNIDHVATIRQARRTVEPDPAAAAVLVELAGADGITVHLREDRRHIQDRDVEILRRTVRTHLNLEMAATRAMVDFALDVRPDYVTLVPERREEVTTEGGLDVGGQIASVGLAVEQLQCAGIPVSLFVDPDAAQLQASARTGAKFVELHTGRYAEARGEQAQRSELAQLAAACDEAQALGLRVNAGHGLTYWNVAPVARLSGMEELNIGHSIIARAVLVGLERAVREMKQAMIAG.

Asn7 is a 3-amino-2-oxopropyl phosphate binding site. 9 to 10 contacts 1-deoxy-D-xylulose 5-phosphate; it reads DH. Arg18 contacts 3-amino-2-oxopropyl phosphate. The active-site Proton acceptor is the His43. 2 residues coordinate 1-deoxy-D-xylulose 5-phosphate: Arg45 and His50. Glu70 functions as the Proton acceptor in the catalytic mechanism. Residue Thr100 coordinates 1-deoxy-D-xylulose 5-phosphate. His191 serves as the catalytic Proton donor. Residues Gly192 and 213 to 214 each bind 3-amino-2-oxopropyl phosphate; that span reads GH.

The protein belongs to the PNP synthase family. Homooctamer; tetramer of dimers.

Its subcellular location is the cytoplasm. The enzyme catalyses 3-amino-2-oxopropyl phosphate + 1-deoxy-D-xylulose 5-phosphate = pyridoxine 5'-phosphate + phosphate + 2 H2O + H(+). The protein operates within cofactor biosynthesis; pyridoxine 5'-phosphate biosynthesis; pyridoxine 5'-phosphate from D-erythrose 4-phosphate: step 5/5. Catalyzes the complicated ring closure reaction between the two acyclic compounds 1-deoxy-D-xylulose-5-phosphate (DXP) and 3-amino-2-oxopropyl phosphate (1-amino-acetone-3-phosphate or AAP) to form pyridoxine 5'-phosphate (PNP) and inorganic phosphate. This chain is Pyridoxine 5'-phosphate synthase, found in Gloeobacter violaceus (strain ATCC 29082 / PCC 7421).